Here is a 64-residue protein sequence, read N- to C-terminus: Large ribosomal subunit protein uL29 (64 aa).

It belongs to the universal ribosomal protein uL29 family.

This chain is Large ribosomal subunit protein uL29, found in Teredinibacter turnerae (strain ATCC 39867 / T7901).